The following is a 258-amino-acid chain: Trans-aconitate 2-methyltransferase (258 aa).

It belongs to the methyltransferase superfamily. Tam family.

The protein localises to the cytoplasm. It carries out the reaction trans-aconitate + S-adenosyl-L-methionine = (E)-3-(methoxycarbonyl)pent-2-enedioate + S-adenosyl-L-homocysteine. Its function is as follows. Catalyzes the S-adenosylmethionine monomethyl esterification of trans-aconitate. The protein is Trans-aconitate 2-methyltransferase of Deinococcus radiodurans (strain ATCC 13939 / DSM 20539 / JCM 16871 / CCUG 27074 / LMG 4051 / NBRC 15346 / NCIMB 9279 / VKM B-1422 / R1).